The sequence spans 315 residues: tRNA dimethylallyltransferase (315 aa).

Residue 14–21 (GPTASGKT) coordinates ATP. Residue 16 to 21 (TASGKT) participates in substrate binding. Interaction with substrate tRNA stretches follow at residues 39 to 42 (DSAL), 163 to 167 (QRIQR), and 248 to 253 (RCVGYR).

It belongs to the IPP transferase family. As to quaternary structure, monomer. Mg(2+) is required as a cofactor.

It catalyses the reaction adenosine(37) in tRNA + dimethylallyl diphosphate = N(6)-dimethylallyladenosine(37) in tRNA + diphosphate. In terms of biological role, catalyzes the transfer of a dimethylallyl group onto the adenine at position 37 in tRNAs that read codons beginning with uridine, leading to the formation of N6-(dimethylallyl)adenosine (i(6)A). This chain is tRNA dimethylallyltransferase, found in Paraburkholderia xenovorans (strain LB400).